Reading from the N-terminus, the 242-residue chain is Ubiquinone biosynthesis O-methyltransferase (242 aa).

S-adenosyl-L-methionine contacts are provided by Arg-44, Gly-64, Asp-85, and Met-129.

Belongs to the methyltransferase superfamily. UbiG/COQ3 family.

The catalysed reaction is a 3-demethylubiquinol + S-adenosyl-L-methionine = a ubiquinol + S-adenosyl-L-homocysteine + H(+). The enzyme catalyses a 3-(all-trans-polyprenyl)benzene-1,2-diol + S-adenosyl-L-methionine = a 2-methoxy-6-(all-trans-polyprenyl)phenol + S-adenosyl-L-homocysteine + H(+). It functions in the pathway cofactor biosynthesis; ubiquinone biosynthesis. In terms of biological role, O-methyltransferase that catalyzes the 2 O-methylation steps in the ubiquinone biosynthetic pathway. The chain is Ubiquinone biosynthesis O-methyltransferase from Salmonella agona (strain SL483).